A 142-amino-acid chain; its full sequence is Protein SprT-like (142 aa).

Positions 4-138 constitute a SprT-like domain; sequence YVKKVSIEDF…FACGYCHGRL (135 aa). H62 serves as a coordination point for Zn(2+). E63 is a catalytic residue. H66 is a Zn(2+) binding site.

It belongs to the SprT family. It depends on Zn(2+) as a cofactor.

The protein localises to the cytoplasm. The chain is Protein SprT-like from Streptococcus agalactiae serotype Ia (strain ATCC 27591 / A909 / CDC SS700).